The following is a 475-amino-acid chain: Ribulose bisphosphate carboxylase large chain (475 aa).

Positions Met1–Ser2 are excised as a propeptide. Pro3 carries the N-acetylproline modification. Lys14 is modified (N6,N6,N6-trimethyllysine). Positions 123 and 173 each coordinate substrate. The Proton acceptor role is filled by Lys175. Residue Lys177 coordinates substrate. Positions 201, 203, and 204 each coordinate Mg(2+). Position 201 is an N6-carboxylysine (Lys201). His294 acts as the Proton acceptor in catalysis. Arg295, His327, and Ser379 together coordinate substrate.

The protein belongs to the RuBisCO large chain family. Type I subfamily. As to quaternary structure, heterohexadecamer of 8 large chains and 8 small chains; disulfide-linked. The disulfide link is formed within the large subunit homodimers. It depends on Mg(2+) as a cofactor. In terms of processing, the disulfide bond which can form in the large chain dimeric partners within the hexadecamer appears to be associated with oxidative stress and protein turnover.

Its subcellular location is the plastid. It is found in the chloroplast. The catalysed reaction is 2 (2R)-3-phosphoglycerate + 2 H(+) = D-ribulose 1,5-bisphosphate + CO2 + H2O. It catalyses the reaction D-ribulose 1,5-bisphosphate + O2 = 2-phosphoglycolate + (2R)-3-phosphoglycerate + 2 H(+). Its function is as follows. RuBisCO catalyzes two reactions: the carboxylation of D-ribulose 1,5-bisphosphate, the primary event in carbon dioxide fixation, as well as the oxidative fragmentation of the pentose substrate in the photorespiration process. Both reactions occur simultaneously and in competition at the same active site. In Pinus pinea (Italian stone pine), this protein is Ribulose bisphosphate carboxylase large chain.